Reading from the N-terminus, the 343-residue chain is Dual oxidase maturation factor 1 (343 aa).

At 1 to 24 the chain is on the extracellular side; it reads MATLGHTFPFYAGPKPTFPMDTTL. A helical membrane pass occupies residues 25 to 45; that stretch reads ASIIMIFLTALATFIVILPGI. Residues 46–51 lie on the Cytoplasmic side of the membrane; sequence RGKTRL. The chain crosses the membrane as a helical span at residues 52–72; it reads FWLLRVVTSLFIGAAILAVNF. At 73 to 183 the chain is on the extracellular side; that stretch reads SSEWSVGQVS…RLAGHYTSAM (111 aa). 3 N-linked (GlcNAc...) asparagine glycosylation sites follow: asparagine 84, asparagine 109, and asparagine 121. Residues 184 to 204 traverse the membrane as a helical segment; the sequence is LWVAFLCWLLANVMLSMPVLV. The Cytoplasmic portion of the chain corresponds to 205–206; it reads YG. A helical transmembrane segment spans residues 207-227; the sequence is GYMLLATGIFQLLALLFFSMA. Residues 228–249 are Extracellular-facing; it reads TSLTSPCPLHLGASVLHTHHGP. The chain crosses the membrane as a helical span at residues 250–270; the sequence is AFWITLTTGLLCVLLGLAMAV. Residues 271 to 343 lie on the Cytoplasmic side of the membrane; it reads AHRMQPHRLK…AHPKDPDCAL (73 aa). The segment at 306–343 is disordered; the sequence is RYRSMADSPKSQDIPLSEASSTKAYCKEAHPKDPDCAL. Over residues 330–343 the composition is skewed to basic and acidic residues; that stretch reads YCKEAHPKDPDCAL.

It belongs to the DUOXA family. May interact with NUMB. In terms of tissue distribution, specifically expressed in thyroid gland. Also detected in esophagus.

The protein localises to the membrane. In terms of biological role, may be required for the maturation and the transport from the endoplasmic reticulum to the plasma membrane of functional DUOX1. The chain is Dual oxidase maturation factor 1 (DUOXA1) from Homo sapiens (Human).